The sequence spans 180 residues: Guanosine-3',5'-bis(diphosphate) 3'-pyrophosphohydrolase MESH1 (180 aa).

An HD domain is found at 33–128 (YINHPIGVAR…VKLADKLYNL (96 aa)). Residues His36, His62, and Asp63 each contribute to the Mn(2+) site. Residues Glu66 and Asp67 each act as nucleophile in the active site. Asp123 lines the Mn(2+) pocket.

The protein belongs to the MESH1 family. The cofactor is Mn(2+).

The catalysed reaction is guanosine 3',5'-bis(diphosphate) + H2O = GDP + diphosphate + H(+). In terms of biological role, ppGpp hydrolyzing enzyme involved in starvation response. The protein is Guanosine-3',5'-bis(diphosphate) 3'-pyrophosphohydrolase MESH1 (hddc3) of Danio rerio (Zebrafish).